Reading from the N-terminus, the 424-residue chain is CinA-like protein (424 aa).

It belongs to the CinA family.

This is CinA-like protein from Shewanella piezotolerans (strain WP3 / JCM 13877).